The chain runs to 406 residues: 1H-pyrrole-2-carbonyl-[peptidyl-carrier protein] brominase (406 aa).

Positions 17, 36, 42, 44, 45, 48, 101, 124, 291, and 304 each coordinate FAD.

It belongs to the flavin-dependent halogenase family.

The catalysed reaction is (1H-pyrrole-2-carbonyl)-[peptidyl-carrier protein] + 3 bromide + 3 FADH2 + 3 O2 = (3,4,5-tribromo-1H-pyrrole-2-carbonyl)-[peptidyl-carrier protein] + 3 FAD + 6 H2O. It catalyses the reaction (1H-pyrrole-2-carbonyl)-[peptidyl-carrier protein] + bromide + FADH2 + O2 = (5-bromo-1H-pyrrole-2-carbonyl)-[peptidyl-carrier protein] + FAD + 2 H2O. It carries out the reaction (5-bromo-1H-pyrrole-2-carbonyl)-[peptidyl-carrier protein] + bromide + FADH2 + O2 = (4,5-dibromo-1H-pyrrole-2-carbonyl)-[peptidyl-carrier protein] + FAD + 2 H2O. The enzyme catalyses (4,5-dibromo-1H-pyrrole-2-carbonyl)-[peptidyl-carrier protein] + bromide + FADH2 + O2 = (3,4,5-tribromo-1H-pyrrole-2-carbonyl)-[peptidyl-carrier protein] + FAD + 2 H2O. Brominase involved in the biosynthesis of polybrominated aromatic organic compounds. Catalyzes three successive rounds of bromination of pyrrolyl-S-Bmp1 to produce mono-, di- and tribromopyrrolyl-S-Bmp1. The protein is 1H-pyrrole-2-carbonyl-[peptidyl-carrier protein] brominase of Pseudoalteromonas luteoviolacea (strain 2ta16).